The primary structure comprises 311 residues: Beta-lactamase (311 aa).

Positions 1-36 form a signal peptide, tat-type signal; it reads MRKPTSSLTRRSVLGAGLGLGGALALGSTTASAASA. Serine 86 functions as the Acyl-ester intermediate in the catalytic mechanism. Residue 252–254 coordinates substrate; it reads KSG.

It belongs to the class-A beta-lactamase family. Post-translationally, predicted to be exported by the Tat system. The position of the signal peptide cleavage has not been experimentally proven.

The catalysed reaction is a beta-lactam + H2O = a substituted beta-amino acid. In terms of biological role, hydrolyzes benzylpenicillin and cloxacillin (at 10% of the rate of benzylpenicillin). The sequence is that of Beta-lactamase (bla) from Streptomyces cellulosae.